We begin with the raw amino-acid sequence, 123 residues long: NADH-quinone oxidoreductase subunit A (123 aa).

Helical transmembrane passes span 11-31 (YLPIAIFFGIAVLVSGLIMIL), 64-84 (ICFYLVAILFIIFDLEIAFLV), and 93-113 (IGKIGFFSMMFFLFVLIIGFI).

The protein belongs to the complex I subunit 3 family. As to quaternary structure, NDH-1 is composed of 14 different subunits. Subunits NuoA, H, J, K, L, M, N constitute the membrane sector of the complex.

Its subcellular location is the cell inner membrane. It carries out the reaction a quinone + NADH + 5 H(+)(in) = a quinol + NAD(+) + 4 H(+)(out). Functionally, NDH-1 shuttles electrons from NADH, via FMN and iron-sulfur (Fe-S) centers, to quinones in the respiratory chain. The immediate electron acceptor for the enzyme in this species is believed to be ubiquinone. Couples the redox reaction to proton translocation (for every two electrons transferred, four hydrogen ions are translocated across the cytoplasmic membrane), and thus conserves the redox energy in a proton gradient. The sequence is that of NADH-quinone oxidoreductase subunit A from Rickettsia conorii (strain ATCC VR-613 / Malish 7).